Reading from the N-terminus, the 501-residue chain is 2-isopropylmalate synthase (501 aa).

The Pyruvate carboxyltransferase domain occupies 7 to 269 (VRIFDTTLRD…QTQIKTEEIA (263 aa)). Mn(2+) is bound by residues Asp-16, His-204, His-206, and Asn-240. A regulatory domain region spans residues 394–501 (QLEGFTVSTG…RAYISALNRL (108 aa)).

The protein belongs to the alpha-IPM synthase/homocitrate synthase family. LeuA type 1 subfamily. In terms of assembly, homodimer. It depends on Mn(2+) as a cofactor.

It localises to the cytoplasm. The catalysed reaction is 3-methyl-2-oxobutanoate + acetyl-CoA + H2O = (2S)-2-isopropylmalate + CoA + H(+). The protein operates within amino-acid biosynthesis; L-leucine biosynthesis; L-leucine from 3-methyl-2-oxobutanoate: step 1/4. Its function is as follows. Catalyzes the condensation of the acetyl group of acetyl-CoA with 3-methyl-2-oxobutanoate (2-ketoisovalerate) to form 3-carboxy-3-hydroxy-4-methylpentanoate (2-isopropylmalate). The sequence is that of 2-isopropylmalate synthase from Leptospira interrogans serogroup Icterohaemorrhagiae serovar copenhageni (strain Fiocruz L1-130).